A 144-amino-acid polypeptide reads, in one-letter code: Acidic phospholipase A2 S15-109 (144 aa).

The first 19 residues, 1–19, serve as a signal peptide directing secretion; it reads MYPAHLLVLLAVCVSLLGA. The propeptide occupies 20-27; it reads SDIPPQPL. 7 disulfide bridges follow: Cys38/Cys98, Cys54/Cys143, Cys56/Cys72, Cys71/Cys126, Cys78/Cys119, Cys87/Cys112, and Cys105/Cys117. Ca(2+) contacts are provided by Tyr55, Gly57, and Gly59. His75 is a catalytic residue. Asp76 is a Ca(2+) binding site. The active site involves Asp120.

Belongs to the phospholipase A2 family. Group I subfamily. D49 sub-subfamily. Requires Ca(2+) as cofactor. As to expression, expressed by the venom gland.

It localises to the secreted. It catalyses the reaction a 1,2-diacyl-sn-glycero-3-phosphocholine + H2O = a 1-acyl-sn-glycero-3-phosphocholine + a fatty acid + H(+). Its function is as follows. Snake venom phospholipase A2 (PLA2) that inhibits collagen-induced platelet aggregation. PLA2 catalyzes the calcium-dependent hydrolysis of the 2-acyl groups in 3-sn-phosphoglycerides. In Austrelaps superbus (Lowland copperhead snake), this protein is Acidic phospholipase A2 S15-109.